A 523-amino-acid polypeptide reads, in one-letter code: Succinate-semialdehyde dehydrogenase, mitochondrial (523 aa).

Residues 1-35 (MATCFLLRNFCAARPALRPPGRLLREPAGAQRRSY) constitute a mitochondrion transit peptide. K114 carries the N6-acetyllysine; alternate modification. At K114 the chain carries N6-succinyllysine; alternate. K123 and K172 each carry N6-succinyllysine. Residues R201 and 216 to 219 (KPAE) contribute to the NAD(+) site. R201 contacts substrate. At K253 the chain carries N6-acetyllysine; alternate. The residue at position 253 (K253) is an N6-succinyllysine; alternate. Position 272-277 (272-277 (GSTATG)) interacts with NAD(+). E294 serves as the catalytic Proton acceptor. R322 provides a ligand contact to substrate. The active-site Nucleophile is C328. Cysteines 328 and 330 form a disulfide. K353 carries the post-translational modification N6-acetyllysine. K390 carries the post-translational modification N6-succinyllysine. K399 is subject to N6-acetyllysine. S486 is a substrate binding site. The residue at position 487 (S487) is a Phosphoserine.

Belongs to the aldehyde dehydrogenase family. As to quaternary structure, homotetramer. In terms of tissue distribution, brain, pancreas, heart, liver, skeletal muscle, kidney. Lower in spleen, lung, kidney and testis.

The protein localises to the mitochondrion. The enzyme catalyses succinate semialdehyde + NAD(+) + H2O = succinate + NADH + 2 H(+). The protein operates within amino-acid degradation; 4-aminobutanoate degradation. Its activity is regulated as follows. Redox-regulated. Inhibited under oxydizing conditions. In terms of biological role, catalyzes one step in the degradation of the inhibitory neurotransmitter gamma-aminobutyric acid (GABA). The sequence is that of Succinate-semialdehyde dehydrogenase, mitochondrial (Aldh5a1) from Rattus norvegicus (Rat).